A 524-amino-acid polypeptide reads, in one-letter code: MATQEIIDSALPYLTKWYTVITLAALVFLISSNIKNYVKAKKLKCRDPPYFKGAGWTGISPLIEIIKVKGNGRLARFWPIKTFDDYPNHTFYMSIIGALKIVLTVIQENIKAVLATQFTDFSLGTRHAHFYPLLGDGIFTLDGEGWKHSRAMLRPQFARDQIGHVKALEPHIQILAKQIKLNKGKTFDIQELFFRFTVDTATEFLFGESVHSLYDEKLGIPTPNEIPGRDNFATAFNTSQHYLATRTYSQTFYFLTNPKEFRDCNAKVHYLAKYFVNKALNFTPEEIEEKSKSGYVFLYELVKQTRDPKVLQDQLLNIMVAGRDTTAGLLSFAMFELARHPEIWSKLREEIEVNFGVGEESRVEEITFESLKRCEYLKAILNETLRMYPSVPVNSRTATRDTTLPRGGGPNGTDPIFIPKGSTVAYIVYKTHRLEEYYGKDADDFRPERWFEPSTKKLGWAYVPFNGGPRICLGQQFALTEASYVITRLVQMFETVSSPPDVEYPPPKCIHLTMSHDDGVFVKM.

A helical membrane pass occupies residues 17-34 (WYTVITLAALVFLISSNI). Cysteine 472 is a heme binding site.

This sequence belongs to the cytochrome P450 family. Requires heme as cofactor.

It localises to the membrane. Its function is as follows. Together with an NADPH cytochrome P450 the enzyme system catalyzes the terminal hydroxylation as the first step in the assimilation of alkanes and fatty acids. Preferentially hydroxylates hexadecane. The protein is Cytochrome P450 52A6 (CYP52A6) of Candida tropicalis (Yeast).